The primary structure comprises 338 residues: Lipoate-protein ligase A (338 aa).

Residues 29–216 (DPNQRVLFLW…AFFSHYGERV (188 aa)) enclose the BPL/LPL catalytic domain. Residues Arg71, 76–79 (GAVF), and Lys134 contribute to the ATP site. (R)-lipoate is bound at residue Lys134.

Belongs to the LplA family. As to quaternary structure, monomer.

Its subcellular location is the cytoplasm. It carries out the reaction L-lysyl-[lipoyl-carrier protein] + (R)-lipoate + ATP = N(6)-[(R)-lipoyl]-L-lysyl-[lipoyl-carrier protein] + AMP + diphosphate + H(+). The protein operates within protein modification; protein lipoylation via exogenous pathway; protein N(6)-(lipoyl)lysine from lipoate: step 1/2. It functions in the pathway protein modification; protein lipoylation via exogenous pathway; protein N(6)-(lipoyl)lysine from lipoate: step 2/2. Functionally, catalyzes both the ATP-dependent activation of exogenously supplied lipoate to lipoyl-AMP and the transfer of the activated lipoyl onto the lipoyl domains of lipoate-dependent enzymes. The sequence is that of Lipoate-protein ligase A from Aeromonas hydrophila subsp. hydrophila (strain ATCC 7966 / DSM 30187 / BCRC 13018 / CCUG 14551 / JCM 1027 / KCTC 2358 / NCIMB 9240 / NCTC 8049).